The chain runs to 288 residues: Protoheme IX farnesyltransferase (288 aa).

9 helical membrane passes run Val16–Asn36, Leu37–Ala57, Ile88–Phe108, Leu111–Leu131, Trp138–Val158, Phe162–Trp182, Ala210–Phe230, Val236–Val256, and Leu265–Phe285.

The protein belongs to the UbiA prenyltransferase family. Protoheme IX farnesyltransferase subfamily.

Its subcellular location is the cell membrane. The catalysed reaction is heme b + (2E,6E)-farnesyl diphosphate + H2O = Fe(II)-heme o + diphosphate. It participates in porphyrin-containing compound metabolism; heme O biosynthesis; heme O from protoheme: step 1/1. In terms of biological role, converts heme B (protoheme IX) to heme O by substitution of the vinyl group on carbon 2 of heme B porphyrin ring with a hydroxyethyl farnesyl side group. The sequence is that of Protoheme IX farnesyltransferase from Thermoplasma acidophilum (strain ATCC 25905 / DSM 1728 / JCM 9062 / NBRC 15155 / AMRC-C165).